The following is a 166-amino-acid chain: Regulatory protein RecX (166 aa).

The protein belongs to the RecX family.

Its subcellular location is the cytoplasm. In terms of biological role, modulates RecA activity. The chain is Regulatory protein RecX from Salmonella agona (strain SL483).